The sequence spans 170 residues: Ribosome maturation factor RimM (170 aa).

Residues 97 to 170 (HPDEYYWVDL…RIVVDWDPEF (74 aa)) form the PRC barrel domain.

It belongs to the RimM family. In terms of assembly, binds ribosomal protein uS19.

The protein localises to the cytoplasm. Its function is as follows. An accessory protein needed during the final step in the assembly of 30S ribosomal subunit, possibly for assembly of the head region. Essential for efficient processing of 16S rRNA. May be needed both before and after RbfA during the maturation of 16S rRNA. It has affinity for free ribosomal 30S subunits but not for 70S ribosomes. The polypeptide is Ribosome maturation factor RimM (Xylella fastidiosa (strain M12)).